The sequence spans 430 residues: MGFQDQRSKEAFARANGVLPGGVNSPVRAFKSVGREPIFIAKGQGARLWDIDGNSYLDYVLSWGPLILGHAHPVVVGAIKAAAERGTSYGAPTEIETECAEEVIKAFPSMEMVRMVSSGTEATMSALRLARGVTGRNKIIKFEGCYHGHGDSLLIKAGSGALTFGVPTSPGVPSSVASQTIVAQYNDLEGLKEIFKECGEDIAAVILEPVTGNMGVVLPQPGFLAGLRTLTQDYGSLLIFDEVMTGFRVSYGGAQGRYQIDPDLTCLGKVIGGGLPVAAYGGKRKYMEQVAPSGPIYQAGTLSGNPLAMAAGLATLKLLQQEGVYEGLEKKTTRLAEGLQSIAQELGFPIWVNSVGAMFSAFFTDQPVIDFKSACSSDVERFGSFFRGMLERGIYLAPSQYEAVFLSAAHTDADIDYTLEQARDVLKSLG.

Lysine 269 is modified (N6-(pyridoxal phosphate)lysine).

This sequence belongs to the class-III pyridoxal-phosphate-dependent aminotransferase family. HemL subfamily. In terms of assembly, homodimer. Pyridoxal 5'-phosphate serves as cofactor.

The protein localises to the cytoplasm. It carries out the reaction (S)-4-amino-5-oxopentanoate = 5-aminolevulinate. Its pathway is porphyrin-containing compound metabolism; protoporphyrin-IX biosynthesis; 5-aminolevulinate from L-glutamyl-tRNA(Glu): step 2/2. This chain is Glutamate-1-semialdehyde 2,1-aminomutase, found in Desulfitobacterium hafniense (strain Y51).